The following is an 857-amino-acid chain: Protein sip-5 (857 aa).

Disordered regions lie at residues 1–81 (MGNA…ARRL), 157–231 (GLPI…FKPT), 384–416 (SESS…APNV), 466–517 (FGRR…GNRR), 545–747 (KAEK…PMFN), and 763–857 (HAGK…QVTL). Composition is skewed to basic and acidic residues over residues 7-16 (KESRGDDSGR) and 36-48 (ESSR…RHDL). Positions 49-61 (TGLLGRAAGGSSS) are enriched in low complexity. Residues 62-81 (HADERHERKETKQEREARRL) are compositionally biased toward basic and acidic residues. 2 stretches are compositionally biased toward polar residues: residues 179-191 (ASPT…TNHL) and 199-208 (SLSTASEHST). 3 stretches are compositionally biased toward low complexity: residues 209 to 230 (SNAG…PFKP), 384 to 394 (SESSVNSGSLS), and 476 to 504 (SASA…TANT). The segment covering 545–572 (KAEKEEQKEAKKREKEREKAEKKAEKAA) has biased composition (basic and acidic residues). Low complexity-rich tracts occupy residues 586 to 604 (SRSG…PGLS) and 621 to 645 (ASVA…ALAP). Positions 648–657 (STKDKGKAVD) are enriched in basic and acidic residues. Positions 688-697 (SSASSASSSA) are enriched in low complexity. Polar residues predominate over residues 698-712 (VESNQGSYVPPSNLQ). Basic and acidic residues predominate over residues 783–799 (ETAKSGEGAGEHVEHVL). Composition is skewed to polar residues over residues 800 to 838 (DSQT…STAS) and 845 to 857 (NETT…QVTL).

It belongs to the SIP5 family.

The protein localises to the cytoplasm. In terms of biological role, may negatively regulate the snf-1 kinase. The polypeptide is Protein sip-5 (sip-5) (Neurospora crassa (strain ATCC 24698 / 74-OR23-1A / CBS 708.71 / DSM 1257 / FGSC 987)).